We begin with the raw amino-acid sequence, 829 residues long: MARRDFIKQTAAAAAATVAGVPLTGYTQNIVTESEAAKLKWSKAPCRFCGTGCGVNVAVKDNQVVATHGDFNAEVNKGLNCVKGYFLSKIMYGSDRLTQPLLRMKDGKYAKDGEFAPVSWDQAFDVMAEQFKRVLKDKGPEAVGMFGSGQWTVWEGYAALKLMKAGFRTNNLDPNARHCMASAAVGFMRTFGADEPMGCYDDIENADAFVLWGSNMAEMHPILWTRVTDRRLSAPATKVAVLSTFEHRSYELADLTLTFEPQSDLAILNYIANHIIRTKRVNRDFVDKHTVFREGNADIGYGLRPEHPLQQAARNAGDAGGSKPITFDDFARFVSKYDLEYTAKLSGVPKNRLEELAELYADPKVRVTSFWTMGFNQHTRGVWCNNMVYNIHLLTGKISTPGNSPFSLTGQPSACGTAREVGTFSHRLPADLVVTNPEHRRHAEEIWKLPDGTIPSKVGAHAVLQNRMLKDGKINAYWVMVNNNMQAAANLMNEGLPGYRNPENFIVVSDAYPTVTTLSADLILPAAMWVEKEGAYGNAERRTQFWHQLVDAPGQARSDLWQLVEFSKRFKVEEVWPADLLAKKPEYRGKTLYDVLFANGKVNQFPNTELDAEYANQEAQAFGFYLQKGLFEEYAEFGRGHGHDLAPFDVYHKARGLRWPVVDGKETLWRYREGSDPYVKPGTGFQFYGNPDGKAVIFALPYEPPPEAPDKEYPFWLSTGRVLEHWHSGSMTRRVPELYKAFPEAVCFMHPDDAQALGVRRGVEVEVVSRRGRMRTRVETRGRDKPPRGLVFVPWFDAGQLINKVTLDATDPISFQTDFKKCAVKIVKV.

The segment at residues 1 to 36 (MARRDFIKQTAAAAAATVAGVPLTGYTQNIVTESEA) is a signal peptide (tat-type signal). The region spanning 39 to 95 (LKWSKAPCRFCGTGCGVNVAVKDNQVVATHGDFNAEVNKGLNCVKGYFLSKIMYGSD) is the 4Fe-4S Mo/W bis-MGD-type domain. [4Fe-4S] cluster-binding residues include C46, C49, C53, and C81. Mo-bis(molybdopterin guanine dinucleotide) is bound by residues K83, Q150, N175, C179, 212-219 (WGSNMAEM), 243-247 (STFEH), 262-264 (QSD), M373, Q377, N483, 509-510 (SD), K532, D559, and 719-728 (TGRVLEHWHS). A substrate-binding site is contributed by W795. The Mo-bis(molybdopterin guanine dinucleotide) site is built by N803 and K820.

The protein belongs to the prokaryotic molybdopterin-containing oxidoreductase family. NasA/NapA/NarB subfamily. Component of the periplasmic nitrate reductase NapAB complex composed of NapA and NapB. The cofactor is [4Fe-4S] cluster. Mo-bis(molybdopterin guanine dinucleotide) serves as cofactor. Post-translationally, predicted to be exported by the Tat system. The position of the signal peptide cleavage has not been experimentally proven.

It is found in the periplasm. It catalyses the reaction 2 Fe(II)-[cytochrome] + nitrate + 2 H(+) = 2 Fe(III)-[cytochrome] + nitrite + H2O. Its function is as follows. Catalytic subunit of the periplasmic nitrate reductase complex NapAB. Receives electrons from NapB and catalyzes the reduction of nitrate to nitrite. The polypeptide is Periplasmic nitrate reductase (Bordetella bronchiseptica (strain ATCC BAA-588 / NCTC 13252 / RB50) (Alcaligenes bronchisepticus)).